A 76-amino-acid polypeptide reads, in one-letter code: UPF0291 protein BA_1897/GBAA_1897/BAS1759 (76 aa).

The protein belongs to the UPF0291 family.

The protein localises to the cytoplasm. This Bacillus anthracis protein is UPF0291 protein BA_1897/GBAA_1897/BAS1759.